Reading from the N-terminus, the 220-residue chain is Ribonuclease HII (220 aa).

The 189-residue stretch at 32 to 220 folds into the RNase H type-2 domain; the sequence is KHIAGIDEAG…FAPIKGRFDC (189 aa). A divalent metal cation-binding residues include D38, E39, and D130.

Belongs to the RNase HII family. The cofactor is Mn(2+). Mg(2+) is required as a cofactor.

The protein resides in the cytoplasm. It catalyses the reaction Endonucleolytic cleavage to 5'-phosphomonoester.. Endonuclease that specifically degrades the RNA of RNA-DNA hybrids. In Brucella canis (strain ATCC 23365 / NCTC 10854 / RM-666), this protein is Ribonuclease HII.